The primary structure comprises 93 residues: Alpha-defensin 2 (93 aa).

Positions 1–19 (MKPLVLLSALVLLSFQVQA) are cleaved as a signal peptide. The propeptide occupies 20 to 58 (DPIQNTDEETKTEEQSGEEDQAVSVSFGDREGASLQEES). Residues 23–49 (QNTDEETKTEEQSGEEDQAVSVSFGDR) form a disordered region. 3 disulfide bridges follow: Cys-64–Cys-92, Cys-66–Cys-81, and Cys-71–Cys-91.

Belongs to the alpha-defensin family. Paneth cells of the small bowel.

The protein localises to the secreted. Its function is as follows. Has broad-spectrum antimicrobial properties. Has antibacterial activity against the Gram-positive bacterium L.monocytogenes EGD and the Gram-negative bacteria E.coli ML-35p and avirulent S.typhimurium 7953, but not against the mouse-virulent S.typhimurium 14028S. Probably contributes to the antimicrobial barrier function of the small bowel mucosa. In Mus musculus (Mouse), this protein is Alpha-defensin 2 (Defa2).